The sequence spans 371 residues: uncharacterized protein (371 aa).

33–40 (GPLNSGKT) is an ATP binding site.

The protein belongs to the archaeal ATPase family.

This is an uncharacterized protein from Methanocaldococcus jannaschii (strain ATCC 43067 / DSM 2661 / JAL-1 / JCM 10045 / NBRC 100440) (Methanococcus jannaschii).